The chain runs to 290 residues: Ribosomal RNA small subunit methyltransferase A (290 aa).

Positions 27, 29, 54, 75, 100, and 125 each coordinate S-adenosyl-L-methionine.

Belongs to the class I-like SAM-binding methyltransferase superfamily. rRNA adenine N(6)-methyltransferase family. RsmA subfamily.

Its subcellular location is the cytoplasm. It carries out the reaction adenosine(1518)/adenosine(1519) in 16S rRNA + 4 S-adenosyl-L-methionine = N(6)-dimethyladenosine(1518)/N(6)-dimethyladenosine(1519) in 16S rRNA + 4 S-adenosyl-L-homocysteine + 4 H(+). Specifically dimethylates two adjacent adenosines (A1518 and A1519) in the loop of a conserved hairpin near the 3'-end of 16S rRNA in the 30S particle. May play a critical role in biogenesis of 30S subunits. The protein is Ribosomal RNA small subunit methyltransferase A of Streptococcus thermophilus (strain ATCC BAA-491 / LMD-9).